We begin with the raw amino-acid sequence, 527 residues long: Estrogen receptor beta (527 aa).

Residues 1–145 are modulating; it reads MDVKNSPSSL…SPSSKRDAHF (145 aa). Ser84 and Ser102 each carry phosphoserine; by MAPK. 2 NR C4-type zinc fingers span residues 146 to 166 and 182 to 206; these read CAVC…CEGC and CPAT…LRKC. The segment at residues 146–211 is a DNA-binding region (nuclear receptor); the sequence is CAVCSDYASG…RLRKCYEVGM (66 aa). The NR LBD domain maps to 261–495; that stretch reads SPEQLVLTLL…DLLLEMLNAH (235 aa). The segment at 505-527 is disordered; that stretch reads TRSERNLAEDSESKEGSQKPQAQ. Residues 506 to 521 show a composition bias toward basic and acidic residues; the sequence is RSERNLAEDSESKEGS.

It belongs to the nuclear hormone receptor family. NR3 subfamily. As to quaternary structure, binds DNA as a homodimer. Can form a heterodimer with ESR1. Interacts with NCOA1, NCOA3, NCOA5 and NCOA6 coactivators, leading to a strong increase of transcription of target genes. Interacts with UBE1C and AKAP13. Interacts with DNTTIP2. Interacts with CCDC62 in the presence of estradiol/E2; this interaction seems to enhance the transcription of target genes. Interacts with DNAAF4. Interacts with PRMT2. Interacts with CCAR2 (via N-terminus) in a ligand-independent manner. Interacts with RBM39, in the presence of estradiol (E2). Interacts with STUB1/CHIP. Phosphorylation at Ser-84 and Ser-102 recruits NCOA1.

Its subcellular location is the nucleus. Functionally, nuclear hormone receptor. Binds estrogens with an affinity similar to that of ESR1/ER-alpha, and activates expression of reporter genes containing estrogen response elements (ERE) in an estrogen-dependent manner. The protein is Estrogen receptor beta (ESR2) of Ovis aries (Sheep).